The sequence spans 503 residues: REST corepressor 2 (503 aa).

The segment at 1 to 62 is disordered; it reads MPSVMEKSHG…IPECKPDNTS (62 aa). Positions 41 to 126 constitute an ELM2 domain; that stretch reads SMIRVGSDYQ…RSLADLANFT (86 aa). In terms of domain architecture, SANT 1 spans 127–178; sequence PFPEEWSVEDKVLFEQAFSFHGKSFQRIQQMLPEKLIPSLVKYYYSWKKTRS. 2 coiled-coil regions span residues 182–206 and 286–314; these read VMDRQARRLQAKREEGMEEVEDQIK and QLETQLISLKRQVQNIKQMNSSLKESLEG. One can recognise an SANT 2 domain in the interval 327-378; sequence KLNARWTTDEQLLAVQAVRKYGKDFQAISEVLGNKTPSQVKTFFISYRRRFN. Residues 385 to 503 form a disordered region; sequence EWEAEQEPSP…VGSHAESTFS (119 aa). The span at 399–412 shows a compositional bias: polar residues; sequence TDMSNKTSGSSQTP. The span at 423–442 shows a compositional bias: low complexity; it reads SVSSSSQPAPPAAAAAASLS.

It belongs to the CoREST family.

It localises to the nucleus. Its function is as follows. May act as a component of a corepressor complex that represses transcription. This chain is REST corepressor 2 (rcor2), found in Xenopus laevis (African clawed frog).